We begin with the raw amino-acid sequence, 177 residues long: Large ribosomal subunit protein uL6 (177 aa).

The protein belongs to the universal ribosomal protein uL6 family. As to quaternary structure, part of the 50S ribosomal subunit.

In terms of biological role, this protein binds to the 23S rRNA, and is important in its secondary structure. It is located near the subunit interface in the base of the L7/L12 stalk, and near the tRNA binding site of the peptidyltransferase center. In Rickettsia felis (strain ATCC VR-1525 / URRWXCal2) (Rickettsia azadi), this protein is Large ribosomal subunit protein uL6.